Here is a 166-residue protein sequence, read N- to C-terminus: Peptidoglycan-associated lipoprotein (166 aa).

The signal sequence occupies residues 1 to 21 (MEMLKFGKFAALALAMAVAVG). Cys22 carries N-palmitoyl cysteine lipidation. Cys22 carries S-diacylglycerol cysteine lipidation. The 113-residue stretch at 54 to 166 (SEEAALRAIT…AQNRRVELRK (113 aa)) folds into the OmpA-like domain. Positions 147 to 166 (VATGNDEQSWAQNRRVELRK) are disordered.

This sequence belongs to the Pal lipoprotein family. The Tol-Pal system is composed of five core proteins: the inner membrane proteins TolA, TolQ and TolR, the periplasmic protein TolB and the outer membrane protein Pal. They form a network linking the inner and outer membranes and the peptidoglycan layer.

The protein localises to the cell outer membrane. Part of the Tol-Pal system, which plays a role in outer membrane invagination during cell division and is important for maintaining outer membrane integrity. This is Peptidoglycan-associated lipoprotein from Pseudomonas putida (Arthrobacter siderocapsulatus).